A 495-amino-acid chain; its full sequence is MDKQYVVALDQGTTSSRAIVFDRDANLVAVSQREFTQIYPKGGWVEHDPMEIWASQSSTLIEVLARAGIHSDEVAAIGITNQRETTIIWDKLTGKPVCNAIVWQCRRSAAICEALKAQGLEPLFRDKTGLLLDPYFSGTKIKWILDNVPGVRERADAGELLFGTVDTWLVWKLTEGKVHVTDPTNASRTLMYNIHSGEWDSELLKALDIPASLLPEVKSSQAVYGTTRIAGEGTEIPVAGMAGDQQAALFGQLCVEPGMAKNTYGTGCFLLMNTGKQAVKSEHGLLTTIAVGDDGGISYALEGAVFMGGATIQWLRDELGLIRDASDTEYFASKVDDTNGVYLVPAFVGLGAPYWDPDARGTLVGLTRGANRNHIIRAALESIAYQSRDLLDAMSKDSGVALKQLKVDGGAVANDFLMQFQADISGVEVLRPAQTETTAMGAAFLGGLAVGFWSNVDEIRHKSGIDRRFVPLMDDKERATLYLGWQDAVRRSLSS.

T13 contributes to the ADP binding site. Residues T13, T14, and S15 each contribute to the ATP site. Position 13 (T13) interacts with sn-glycerol 3-phosphate. Residue R17 coordinates ADP. Sn-glycerol 3-phosphate is bound by residues R83, E84, Y135, and D244. Positions 83, 84, 135, 244, and 245 each coordinate glycerol. 2 residues coordinate ADP: T266 and G309. ATP contacts are provided by T266, G309, Q313, and G410. Residues G410 and N414 each contribute to the ADP site.

The protein belongs to the FGGY kinase family.

The enzyme catalyses glycerol + ATP = sn-glycerol 3-phosphate + ADP + H(+). Its pathway is polyol metabolism; glycerol degradation via glycerol kinase pathway; sn-glycerol 3-phosphate from glycerol: step 1/1. Its activity is regulated as follows. Inhibited by fructose 1,6-bisphosphate (FBP). Its function is as follows. Key enzyme in the regulation of glycerol uptake and metabolism. Catalyzes the phosphorylation of glycerol to yield sn-glycerol 3-phosphate. The polypeptide is Glycerol kinase (Shewanella amazonensis (strain ATCC BAA-1098 / SB2B)).